The sequence spans 214 residues: Phosphatidyl-N-methylethanolamine N-methyltransferase (214 aa).

The Lumenal portion of the chain corresponds to 1 to 19; it reads MPLVALGVADLFNFVDYSK. An intramembrane region (helical) is located at residues 20-40; sequence TSLAISAAAIAFNPTFWNIVA. Residues 41–52 lie on the Lumenal side of the membrane; the sequence is RREYRTKFLTRA. Residues 53–74 form a helical membrane-spanning segment; the sequence is FGGNAQVACYFLAVTIFGLGLV. Over 75–101 the chain is Cytoplasmic; the sequence is RDFLYERALRDQPSHPLLEGTYVKYAA. A helical transmembrane segment spans residues 102-122; that stretch reads YALLALGNLLVITSTMRLGIT. S-adenosyl-L-methionine is bound at residue 106 to 108; sequence ALG. Residues 123–165 are Lumenal-facing; the sequence is GTFLGDYFGILMDGIVTGFPFNVTSAPMYYGSTMSFLGTALLY. Residues 166–186 form a helical membrane-spanning segment; the sequence is GKPAGLLLTAWVLFVYIIAIQ. The Cytoplasmic segment spans residues 187–214; that stretch reads FENPFTAEIYAKRDRERAKAAGTSKKEL. 188–189 contributes to the S-adenosyl-L-methionine binding site; sequence EN.

It belongs to the class VI-like SAM-binding methyltransferase superfamily. PEMT/PEM2 methyltransferase family.

Its subcellular location is the endoplasmic reticulum membrane. It is found in the mitochondrion membrane. The enzyme catalyses a 1,2-diacyl-sn-glycero-3-phospho-N-methylethanolamine + S-adenosyl-L-methionine = a 1,2-diacyl-sn-glycero-3-phospho-N,N-dimethylethanolamine + S-adenosyl-L-homocysteine + H(+). It catalyses the reaction a 1,2-diacyl-sn-glycero-3-phospho-N,N-dimethylethanolamine + S-adenosyl-L-methionine = a 1,2-diacyl-sn-glycero-3-phosphocholine + S-adenosyl-L-homocysteine + H(+). It participates in phospholipid metabolism; phosphatidylcholine biosynthesis. Its function is as follows. Catalyzes the second two steps of the methylation pathway of phosphatidylcholine biosynthesis, the SAM-dependent methylation of phosphatidylmonomethylethanolamine (PMME) to phosphatidyldimethylethanolamine (PDME) and of PDME to phosphatidylcholine (PC). This is Phosphatidyl-N-methylethanolamine N-methyltransferase from Neurospora crassa (strain ATCC 24698 / 74-OR23-1A / CBS 708.71 / DSM 1257 / FGSC 987).